A 500-amino-acid polypeptide reads, in one-letter code: Aspartyl/glutamyl-tRNA(Asn/Gln) amidotransferase subunit B (500 aa).

The protein belongs to the GatB/GatE family. GatB subfamily. In terms of assembly, heterotrimer of A, B and C subunits.

It carries out the reaction L-glutamyl-tRNA(Gln) + L-glutamine + ATP + H2O = L-glutaminyl-tRNA(Gln) + L-glutamate + ADP + phosphate + H(+). The catalysed reaction is L-aspartyl-tRNA(Asn) + L-glutamine + ATP + H2O = L-asparaginyl-tRNA(Asn) + L-glutamate + ADP + phosphate + 2 H(+). Functionally, allows the formation of correctly charged Asn-tRNA(Asn) or Gln-tRNA(Gln) through the transamidation of misacylated Asp-tRNA(Asn) or Glu-tRNA(Gln) in organisms which lack either or both of asparaginyl-tRNA or glutaminyl-tRNA synthetases. The reaction takes place in the presence of glutamine and ATP through an activated phospho-Asp-tRNA(Asn) or phospho-Glu-tRNA(Gln). In Clavibacter sepedonicus (Clavibacter michiganensis subsp. sepedonicus), this protein is Aspartyl/glutamyl-tRNA(Asn/Gln) amidotransferase subunit B.